The primary structure comprises 393 residues: Na(+)/H(+) antiporter NhaA (393 aa).

11 helical membrane-spanning segments follow: residues 14–34 (AAGM…NWSV), 60–80 (LLLW…GLEV), 96–116 (MLPL…FLLF), 125–145 (AGWA…LTLL), 155–175 (VFLL…IALF), 179–199 (QVFW…AYMN), 218–238 (VCIL…GFFI), 263–283 (FLIV…GIVL), 292–312 (LGIA…FSWL), 330–350 (IVAV…ITLL), and 362–382 (YAKL…YLAL).

The protein belongs to the NhaA Na(+)/H(+) (TC 2.A.33) antiporter family.

The protein resides in the cell inner membrane. It catalyses the reaction Na(+)(in) + 2 H(+)(out) = Na(+)(out) + 2 H(+)(in). Na(+)/H(+) antiporter that extrudes sodium in exchange for external protons. This Pectobacterium atrosepticum (strain SCRI 1043 / ATCC BAA-672) (Erwinia carotovora subsp. atroseptica) protein is Na(+)/H(+) antiporter NhaA.